Here is a 601-residue protein sequence, read N- to C-terminus: DNA ligase 2 (601 aa).

An ATP-binding site is contributed by E263. The N6-AMP-lysine intermediate role is filled by K265. ATP is bound by residues R270, R285, E314, F354, R432, and K438.

The protein belongs to the ATP-dependent DNA ligase family. Requires Mg(2+) as cofactor.

The catalysed reaction is ATP + (deoxyribonucleotide)n-3'-hydroxyl + 5'-phospho-(deoxyribonucleotide)m = (deoxyribonucleotide)n+m + AMP + diphosphate.. In terms of biological role, DNA ligase that seals nicks in double-stranded DNA during DNA replication, DNA recombination and DNA repair. The protein is DNA ligase 2 of Thermofilum pendens (strain DSM 2475 / Hrk 5).